The chain runs to 395 residues: Torsin-3A (395 aa).

Positions 1-24 (MFFGAFWLLLLLLLPPLRPPGAQG) are cleaved as a signal peptide. An N-linked (GlcNAc...) asparagine glycan is attached at asparagine 120. 165–172 (GWSGTGKN) lines the ATP pocket.

Belongs to the ClpA/ClpB family. Torsin subfamily. May not form homohexamers. Post-translationally, N-glycosylated.

Its subcellular location is the cytoplasm. It localises to the endoplasmic reticulum lumen. This chain is Torsin-3A (Tor3a), found in Rattus norvegicus (Rat).